A 125-amino-acid polypeptide reads, in one-letter code: Protein ApaG (125 aa).

One can recognise an ApaG domain in the interval 1-125; it reads MINSPRVCIQ…FRLAVPTLIH (125 aa).

The sequence is that of Protein ApaG from Citrobacter koseri (strain ATCC BAA-895 / CDC 4225-83 / SGSC4696).